A 172-amino-acid chain; its full sequence is Phosphopantetheine adenylyltransferase (172 aa).

Thr14 lines the substrate pocket. Residues 14 to 15 (TF) and His22 contribute to the ATP site. Positions 46, 78, and 92 each coordinate substrate. Residues 93–95 (GLR), Glu103, and 128–134 (WLYISST) contribute to the ATP site.

This sequence belongs to the bacterial CoaD family. Homohexamer. The cofactor is Mg(2+).

Its subcellular location is the cytoplasm. The enzyme catalyses (R)-4'-phosphopantetheine + ATP + H(+) = 3'-dephospho-CoA + diphosphate. The protein operates within cofactor biosynthesis; coenzyme A biosynthesis; CoA from (R)-pantothenate: step 4/5. Functionally, reversibly transfers an adenylyl group from ATP to 4'-phosphopantetheine, yielding dephospho-CoA (dPCoA) and pyrophosphate. The sequence is that of Phosphopantetheine adenylyltransferase from Lawsonia intracellularis (strain PHE/MN1-00).